Consider the following 510-residue polypeptide: Histidine ammonia-lyase (510 aa).

The 5-imidazolinone (Ala-Gly) cross-link spans 143 to 145 (ASG). Ser144 bears the 2,3-didehydroalanine (Ser) mark.

The protein belongs to the PAL/histidase family. Contains an active site 4-methylidene-imidazol-5-one (MIO), which is formed autocatalytically by cyclization and dehydration of residues Ala-Ser-Gly.

Its subcellular location is the cytoplasm. The catalysed reaction is L-histidine = trans-urocanate + NH4(+). Its pathway is amino-acid degradation; L-histidine degradation into L-glutamate; N-formimidoyl-L-glutamate from L-histidine: step 1/3. In Shewanella pealeana (strain ATCC 700345 / ANG-SQ1), this protein is Histidine ammonia-lyase.